The following is a 396-amino-acid chain: Acetate kinase (396 aa).

Mg(2+) is bound at residue N7. K14 serves as a coordination point for ATP. R88 provides a ligand contact to substrate. The active-site Proton donor/acceptor is the D145. ATP contacts are provided by residues 205–209 (HLGNG), 279–281 (DFR), and 327–331 (GIGEN). A Mg(2+)-binding site is contributed by E381.

It belongs to the acetokinase family. As to quaternary structure, homodimer. Mg(2+) is required as a cofactor. Requires Mn(2+) as cofactor.

The protein resides in the cytoplasm. The catalysed reaction is acetate + ATP = acetyl phosphate + ADP. It functions in the pathway metabolic intermediate biosynthesis; acetyl-CoA biosynthesis; acetyl-CoA from acetate: step 1/2. Catalyzes the formation of acetyl phosphate from acetate and ATP. Can also catalyze the reverse reaction. The sequence is that of Acetate kinase from Campylobacter jejuni subsp. jejuni serotype O:2 (strain ATCC 700819 / NCTC 11168).